The sequence spans 1342 residues: DNA-directed RNA polymerase subunit beta (1342 aa).

The protein belongs to the RNA polymerase beta chain family. As to quaternary structure, the RNAP catalytic core consists of 2 alpha, 1 beta, 1 beta' and 1 omega subunit. When a sigma factor is associated with the core the holoenzyme is formed, which can initiate transcription.

It carries out the reaction RNA(n) + a ribonucleoside 5'-triphosphate = RNA(n+1) + diphosphate. In terms of biological role, DNA-dependent RNA polymerase catalyzes the transcription of DNA into RNA using the four ribonucleoside triphosphates as substrates. This is DNA-directed RNA polymerase subunit beta from Pectobacterium carotovorum subsp. carotovorum (strain PC1).